The primary structure comprises 276 residues: SKA complex subunit 1 homolog (276 aa).

A coiled-coil region spans residues 48–78 (VDVSLTAMEAQLQAVRRRLQEEREAFPKAKK).

The protein belongs to the SKA1 family.

This is SKA complex subunit 1 homolog from Oryza sativa subsp. indica (Rice).